The primary structure comprises 67 residues: Conotoxin Cl6.6a (67 aa).

Residues 1–24 (MKLTCVLIAAVLLLAVCQLDSADA) form the signal peptide. A propeptide spanning residues 25-37 (TGYMRKNPSLRSP) is cleaved from the precursor. 3 cysteine pairs are disulfide-bonded: cysteine 43/cysteine 57, cysteine 50/cysteine 61, and cysteine 56/cysteine 65.

This sequence belongs to the conotoxin O1 superfamily. Expressed by the venom duct.

The protein localises to the secreted. The sequence is that of Conotoxin Cl6.6a from Californiconus californicus (California cone).